The sequence spans 143 residues: Nucleoside diphosphate kinase (143 aa).

ATP-binding residues include Lys11, Phe59, Arg87, Thr93, Arg104, and Asn114. The active-site Pros-phosphohistidine intermediate is His117.

The protein belongs to the NDK family. Homotetramer. The cofactor is Mg(2+).

The protein localises to the cytoplasm. It carries out the reaction a 2'-deoxyribonucleoside 5'-diphosphate + ATP = a 2'-deoxyribonucleoside 5'-triphosphate + ADP. It catalyses the reaction a ribonucleoside 5'-diphosphate + ATP = a ribonucleoside 5'-triphosphate + ADP. Major role in the synthesis of nucleoside triphosphates other than ATP. The ATP gamma phosphate is transferred to the NDP beta phosphate via a ping-pong mechanism, using a phosphorylated active-site intermediate. The sequence is that of Nucleoside diphosphate kinase from Shewanella denitrificans (strain OS217 / ATCC BAA-1090 / DSM 15013).